Here is a 310-residue protein sequence, read N- to C-terminus: B3 domain-containing protein At4g02870 (310 aa).

Positions 1 to 21 (MTLSDDPISPSTQESSNSSYV) are enriched in polar residues. The segment at 1–39 (MTLSDDPISPSTQESSNSSYVRSKEAEKNSPSQETDEEV) is disordered. Positions 205–300 (RCGRLILQSS…RLQFGVISRN (96 aa)) form a DNA-binding region, TF-B3.

It is found in the nucleus. The protein is B3 domain-containing protein At4g02870 (ARF42) of Arabidopsis thaliana (Mouse-ear cress).